The primary structure comprises 231 residues: ATP synthase subunit a (231 aa).

A run of 5 helical transmembrane segments spans residues 14 to 34, 78 to 98, 107 to 127, 174 to 194, and 196 to 216; these read GFLKLNATIVFTWGLMLVLAV, YLGFLGTLFLFVATASLCTVI, SLSTTAALAFCVFVAVPFFGI, MIIGILLTITPFIFPIVMTAL, and LLTGMVQAYIFSILAAVYIAA.

Belongs to the ATPase A chain family. F-type ATPases have 2 components, CF(1) - the catalytic core - and CF(0) - the membrane proton channel. CF(1) has five subunits: alpha(3), beta(3), gamma(1), delta(1), epsilon(1). CF(0) has three main subunits: a(1), b(2) and c(9-12). The alpha and beta chains form an alternating ring which encloses part of the gamma chain. CF(1) is attached to CF(0) by a central stalk formed by the gamma and epsilon chains, while a peripheral stalk is formed by the delta and b chains.

The protein localises to the cell inner membrane. Functionally, key component of the proton channel; it plays a direct role in the translocation of protons across the membrane. The chain is ATP synthase subunit a from Albidiferax ferrireducens (strain ATCC BAA-621 / DSM 15236 / T118) (Rhodoferax ferrireducens).